A 734-amino-acid polypeptide reads, in one-letter code: Photosystem I P700 chlorophyll a apoprotein A2 (734 aa).

8 consecutive transmembrane segments (helical) span residues 46–69, 135–158, 175–199, 273–291, 330–353, 369–395, 417–439, and 517–535; these read IFAS…FHVA, LYIG…LHLQ, LNHH…HVAI, MAHH…GHMY, LHFQ…QHMY, AALY…IFFI, AIIS…LYVH, and FLVH…LILV. Residues Cys559 and Cys568 each contribute to the [4Fe-4S] cluster site. A run of 2 helical transmembrane segments spans residues 575-596 and 643-665; these read AFYL…YWHW and LSVW…MFLI. Residues His654, Met662, and Tyr670 each contribute to the chlorophyll a site. Trp671 contacts phylloquinone. Residues 707–727 form a helical membrane-spanning segment; the sequence is LVGLAHFSVGYIFTYAAFLIA.

This sequence belongs to the PsaA/PsaB family. In terms of assembly, the PsaA/B heterodimer binds the P700 chlorophyll special pair and subsequent electron acceptors. PSI consists of a core antenna complex that captures photons, and an electron transfer chain that converts photonic excitation into a charge separation. The eukaryotic PSI reaction center is composed of at least 11 subunits. The cofactor is P700 is a chlorophyll a/chlorophyll a' dimer, A0 is one or more chlorophyll a, A1 is one or both phylloquinones and FX is a shared 4Fe-4S iron-sulfur center..

Its subcellular location is the plastid. The protein resides in the chloroplast thylakoid membrane. The enzyme catalyses reduced [plastocyanin] + hnu + oxidized [2Fe-2S]-[ferredoxin] = oxidized [plastocyanin] + reduced [2Fe-2S]-[ferredoxin]. PsaA and PsaB bind P700, the primary electron donor of photosystem I (PSI), as well as the electron acceptors A0, A1 and FX. PSI is a plastocyanin-ferredoxin oxidoreductase, converting photonic excitation into a charge separation, which transfers an electron from the donor P700 chlorophyll pair to the spectroscopically characterized acceptors A0, A1, FX, FA and FB in turn. Oxidized P700 is reduced on the lumenal side of the thylakoid membrane by plastocyanin. The sequence is that of Photosystem I P700 chlorophyll a apoprotein A2 from Populus alba (White poplar).